Reading from the N-terminus, the 270-residue chain is UPF0246 protein Psyc_0554 (270 aa).

It belongs to the UPF0246 family.

This is UPF0246 protein Psyc_0554 from Psychrobacter arcticus (strain DSM 17307 / VKM B-2377 / 273-4).